Reading from the N-terminus, the 871-residue chain is Serrate RNA effector molecule homolog (871 aa).

Residues 1-90 (MGDSDDEYDR…RRDWDGHSSD (90 aa)) are disordered. N-acetylglycine is present on Gly-2. Position 4 is a phosphoserine (Ser-4). Position 8 is a phosphotyrosine (Tyr-8). Over residues 8–73 (YDRRRRDKFR…ERFSPPRHEL (66 aa)) the composition is skewed to basic and acidic residues. Residues Ser-67, Ser-74, and Ser-136 each carry the phosphoserine modification. Lys-150 participates in a covalent cross-link: Glycyl lysine isopeptide (Lys-Gly) (interchain with G-Cter in SUMO2). The disordered stretch occupies residues 272-411 (EEEEQAGKPG…KPKDAAGLEC (140 aa)). A compositionally biased stretch (basic and acidic residues) spans 297–347 (DGERKTNDKDEKKEDSKQAENDSSNDDKTKKSEGDGDKEEKKEDSEKEAKK). The span at 370-385 (SESESESGQAEEEKEE) shows a compositional bias: acidic residues. Basic and acidic residues predominate over residues 386–411 (AEALKEKEKPKEEEWEKPKDAAGLEC). A phosphoserine mark is found at Ser-492 and Ser-539. Thr-543 bears the Phosphothreonine mark. Position 569 is a phosphoserine (Ser-569). A disordered region spans residues 574 to 597 (ELLGSSGGAPPEEPPKEGNPAEIN). Thr-670 bears the Phosphothreonine mark. Phosphoserine is present on Ser-678. An omega-N-methylarginine mark is found at Arg-828, Arg-835, and Arg-845. The interval 830–849 (NYDAFRGQGGYPGKPRNRMV) is disordered.

The protein belongs to the ARS2 family. As to quaternary structure, interacts with CASP8AP2, ERBB4, NCBP1/CBP80 and DROSHA. Interacts with LUZP4. Interacts with NCBP2/CBP20 and NCBP3. Interacts with MTREX.

Its subcellular location is the nucleus. The protein resides in the nucleoplasm. It is found in the cytoplasm. Functionally, acts as a mediator between the cap-binding complex (CBC) and the primary microRNAs (miRNAs) processing machinery during cell proliferation. Contributes to the stability and delivery of capped primary miRNA transcripts to the primary miRNA processing complex containing DGCR8 and DROSHA, thereby playing a role in RNA-mediated gene silencing (RNAi) by miRNAs. Binds capped RNAs (m7GpppG-capped RNA); however interaction is probably mediated via its interaction with NCBP1/CBP80 component of the CBC complex. Involved in cell cycle progression at S phase. Does not directly confer arsenite resistance but rather modulates arsenic sensitivity. Independently of its activity on miRNAs, necessary and sufficient to promote neural stem cell self-renewal. Does so by directly binding SOX2 promoter and positively regulating its transcription. This is Serrate RNA effector molecule homolog (SRRT) from Pongo abelii (Sumatran orangutan).